The sequence spans 78 residues: Large ribosomal subunit protein bL28 (78 aa).

It belongs to the bacterial ribosomal protein bL28 family.

This is Large ribosomal subunit protein bL28 from Klebsiella pneumoniae (strain 342).